The sequence spans 180 residues: Acireductone dioxygenase (180 aa).

Positions 97, 99, 103, and 141 each coordinate Fe(2+). Residues H97, H99, E103, and H141 each coordinate Ni(2+).

The protein belongs to the acireductone dioxygenase (ARD) family. As to quaternary structure, monomer. Fe(2+) is required as a cofactor. Requires Ni(2+) as cofactor.

The catalysed reaction is 1,2-dihydroxy-5-(methylsulfanyl)pent-1-en-3-one + O2 = 3-(methylsulfanyl)propanoate + CO + formate + 2 H(+). It catalyses the reaction 1,2-dihydroxy-5-(methylsulfanyl)pent-1-en-3-one + O2 = 4-methylsulfanyl-2-oxobutanoate + formate + 2 H(+). It participates in amino-acid biosynthesis; L-methionine biosynthesis via salvage pathway; L-methionine from S-methyl-5-thio-alpha-D-ribose 1-phosphate: step 5/6. Catalyzes 2 different reactions between oxygen and the acireductone 1,2-dihydroxy-3-keto-5-methylthiopentene (DHK-MTPene) depending upon the metal bound in the active site. Fe-containing acireductone dioxygenase (Fe-ARD) produces formate and 2-keto-4-methylthiobutyrate (KMTB), the alpha-ketoacid precursor of methionine in the methionine recycle pathway. Ni-containing acireductone dioxygenase (Ni-ARD) produces methylthiopropionate, carbon monoxide and formate, and does not lie on the methionine recycle pathway. In Cronobacter sakazakii (strain ATCC BAA-894) (Enterobacter sakazakii), this protein is Acireductone dioxygenase.